The following is a 611-amino-acid chain: tRNA uridine 5-carboxymethylaminomethyl modification enzyme MnmG (611 aa).

Residues 8-13 (GAGHAG), Val-120, and Ser-175 contribute to the FAD site. Residue 268 to 282 (GPRYCPSIEDKIVRF) participates in NAD(+) binding. Gln-365 is an FAD binding site.

Belongs to the MnmG family. Homodimer. Heterotetramer of two MnmE and two MnmG subunits. Requires FAD as cofactor.

The protein localises to the cytoplasm. In terms of biological role, NAD-binding protein involved in the addition of a carboxymethylaminomethyl (cmnm) group at the wobble position (U34) of certain tRNAs, forming tRNA-cmnm(5)s(2)U34. The protein is tRNA uridine 5-carboxymethylaminomethyl modification enzyme MnmG of Mycoplasmoides gallisepticum (strain R(low / passage 15 / clone 2)) (Mycoplasma gallisepticum).